A 112-amino-acid polypeptide reads, in one-letter code: uncharacterized protein (112 aa).

This is an uncharacterized protein from Acanthamoeba polyphaga mimivirus (APMV).